A 62-amino-acid polypeptide reads, in one-letter code: Photosystem II reaction center protein Z (62 aa).

2 consecutive transmembrane segments (helical) span residues 8–28 (ALFA…VAFA) and 41–61 (FSGA…NSFI).

The protein belongs to the PsbZ family. As to quaternary structure, PSII is composed of 1 copy each of membrane proteins PsbA, PsbB, PsbC, PsbD, PsbE, PsbF, PsbH, PsbI, PsbJ, PsbK, PsbL, PsbM, PsbT, PsbY, PsbZ, Psb30/Ycf12, at least 3 peripheral proteins of the oxygen-evolving complex and a large number of cofactors. It forms dimeric complexes.

The protein localises to the plastid. It is found in the chloroplast thylakoid membrane. Functionally, may control the interaction of photosystem II (PSII) cores with the light-harvesting antenna, regulates electron flow through the 2 photosystem reaction centers. PSII is a light-driven water plastoquinone oxidoreductase, using light energy to abstract electrons from H(2)O, generating a proton gradient subsequently used for ATP formation. The polypeptide is Photosystem II reaction center protein Z (Adiantum capillus-veneris (Maidenhair fern)).